Consider the following 863-residue polypeptide: MKALRRFTVRAHLPERLAALDQLSTNLRWSWDKPTQDLFAAIDPALWEQCGHDPVALLGAVNPARLDELALDAEFLGALDELAADLNDYLSRPLWYQEQQDAGVAAQALPTGIAYFSLEFGVAEVLPNYSGGLGILAGDHLKSASDLGVPLIAVGLYYRSGYFRQSLTADGWQHETYPSLDPQGLPLRLLTDANGDPVLVEVALGDNAVLRARIWVAQVGRVPLLLLDSDIPENEHDLRNVTDRLYGGDQEHRIEQEILAGIGGVRAIRAYTAVEKLTPPEVFHMNEGHAGFLGIERIRELVTDAGLDFDTALTVVRSSTVFTTHTPVPAGIDRFPLEMVQRYVNDQRGDGRSRLLPGLPADRIVALGAEDDPAKFNMAHMGLRLAQRANGVSLLHGRVSRAMFNELWAGFDPDEVPIGSVTNGVHAPTWAAPQWLQLGRELAGSDSLREPVVWQRLHQVDPAHLWWIRSQLRSMLVEDVRARLRQSWLERGATDAELGWIATAFDPNVLTVGFARRVPTYKRLTLMLRDPDRLEQLLLDEQRPIQLIVAGKSHPADDGGKALIQQVVRFADRPQVRHRIAFLPNYDMSMARLLYWGCDVWLNNPLRPLEACGTSGMKSALNGGLNLSIRDGWWDEWYDGENGWEIPSADGVADENRRDDLEAGALYDLLAQAVAPKFYERDERGVPQRWVEMVRHTLQTLGPKVLASRMVRDYVEHYYAPAAQSFRRTAGAQFDAARELADYRRRAEEAWPKIEIADVDSTGLPDTPLLGSQLTLTATVRLAGLRPNDVTVQGVLGRVDAGDVLMDPVTVEMAHTGTGDGGYEIFSTTTPLPLAGPVGYTVRVLPRHPMLAASNELGLVTLA.

K618 carries the N6-(pyridoxal phosphate)lysine modification.

Belongs to the glycogen phosphorylase family. It depends on pyridoxal 5'-phosphate as a cofactor.

The enzyme catalyses [(1-&gt;4)-alpha-D-glucosyl](n) + phosphate = [(1-&gt;4)-alpha-D-glucosyl](n-1) + alpha-D-glucose 1-phosphate. Its function is as follows. Phosphorylase is an important allosteric enzyme in carbohydrate metabolism. Enzymes from different sources differ in their regulatory mechanisms and in their natural substrates. However, all known phosphorylases share catalytic and structural properties. The sequence is that of Glycogen phosphorylase (glgP) from Mycobacterium tuberculosis (strain CDC 1551 / Oshkosh).